Reading from the N-terminus, the 317-residue chain is Tegument protein UL14 homolog (317 aa).

The segment at isoleucine 166–leucine 291 is disordered. The segment covering lysine 182–glycine 195 has biased composition (basic and acidic residues). The segment covering asparagine 198 to threonine 211 has biased composition (polar residues). 2 stretches are compositionally biased toward basic and acidic residues: residues alanine 217 to serine 236 and serine 249 to glutamate 265.

The protein belongs to the alphaherpesvirinae HHV-1 UL14 protein family.

Its subcellular location is the virion tegument. It localises to the host cytoplasm. It is found in the host nucleus. Functionally, contributes to the nuclear transport of the viral transcriptional activator VP16 during the early phase of infection. Therefore, participates indirectly in the regulation of the immediate-early gene expression. Additionally, seems to be important for efficient nuclear targeting of capsids. The polypeptide is Tegument protein UL14 homolog (Equus caballus (Horse)).